Here is a 228-residue protein sequence, read N- to C-terminus: 7-cyano-7-deazaguanine synthase (228 aa).

9–19 (LSGGPDSTTVL) is an ATP binding site. The Zn(2+) site is built by C193, C203, C206, and C209.

It belongs to the QueC family. It depends on Zn(2+) as a cofactor.

The catalysed reaction is 7-carboxy-7-deazaguanine + NH4(+) + ATP = 7-cyano-7-deazaguanine + ADP + phosphate + H2O + H(+). It participates in purine metabolism; 7-cyano-7-deazaguanine biosynthesis. Catalyzes the ATP-dependent conversion of 7-carboxy-7-deazaguanine (CDG) to 7-cyano-7-deazaguanine (preQ(0)). The protein is 7-cyano-7-deazaguanine synthase of Rickettsia rickettsii (strain Iowa).